The primary structure comprises 167 residues: Intermembrane phospholipid transport system binding protein MlaD (167 aa).

Residues 1–6 are Cytoplasmic-facing; sequence MRQTIK. The helical; Signal-anchor for type II membrane protein transmembrane segment at 7-27 threads the bilayer; it reads YEFWVGLFLLLGIGALVFLGL. Residues 28 to 167 are Periplasmic-facing; the sequence is RVANVQGFAE…GNEKSESTEQ (140 aa). An MCE/MlaD region spans residues 40 to 118; that stretch reads SYTVTATFDN…GEQYIALTMG (79 aa).

This sequence belongs to the MlaD family. As to quaternary structure, the complex is composed of two ATP-binding proteins (MlaF), two transmembrane proteins (MlaE), two cytoplasmic solute-binding proteins (MlaB) and six periplasmic solute-binding proteins (MlaD).

It localises to the cell inner membrane. In terms of biological role, part of the ABC transporter complex MlaFEDB, which is involved in a phospholipid transport pathway that maintains lipid asymmetry in the outer membrane by retrograde trafficking of phospholipids from the outer membrane to the inner membrane. MlaD functions in substrate binding with strong affinity for phospholipids and modulates ATP hydrolytic activity of the complex. This Haemophilus influenzae (strain ATCC 51907 / DSM 11121 / KW20 / Rd) protein is Intermembrane phospholipid transport system binding protein MlaD.